The chain runs to 415 residues: Heterogeneous nuclear ribonucleoprotein F (415 aa).

Met-1 is subject to N-acetylmethionine. Met-2 bears the N-acetylmethionine; in Heterogeneous nuclear ribonucleoprotein F, N-terminally processed mark. The RRM 1 domain occupies 11 to 90; sequence YVVKLRGLPW…RYIEVFKSHR (80 aa). Residue Lys-72 forms a Glycyl lysine isopeptide (Lys-Gly) (interchain with G-Cter in SUMO) linkage. The interval 81-86 is interaction with RNA; that stretch reads RYIEVF. Lys-87 is covalently cross-linked (Glycyl lysine isopeptide (Lys-Gly) (interchain with G-Cter in SUMO2)). Phosphoserine is present on residues Ser-104, Ser-107, and Ser-161. One can recognise an RRM 2 domain in the interval 111–188; that stretch reads GFVRLRGLPF…RYIEVFKSSQ (78 aa). Lys-167 participates in a covalent cross-link: Glycyl lysine isopeptide (Lys-Gly) (interchain with G-Cter in SUMO2). Residues 179–184 are interaction with RNA; that stretch reads RYIEVF. Residue Lys-185 forms a Glycyl lysine isopeptide (Lys-Gly) (interchain with G-Cter in SUMO2) linkage. Phosphoserine occurs at positions 187, 193, and 195. Lys-200 carries the post-translational modification N6-acetyllysine; alternate. A Glycyl lysine isopeptide (Lys-Gly) (interchain with G-Cter in SUMO2); alternate cross-link involves residue Lys-200. Thr-215 carries the post-translational modification Phosphothreonine. Lys-224 carries the post-translational modification N6-acetyllysine; alternate. Residue Lys-224 forms a Glycyl lysine isopeptide (Lys-Gly) (interchain with G-Cter in SUMO2); alternate linkage. Ser-265 bears the Phosphoserine mark. The 78-residue stretch at 289–366 folds into the RRM 3 domain; the sequence is HCVHMRGLPY…IELFLNSTTG (78 aa). Positions 355-360 are interaction with RNA; that stretch reads RYIELF.

Identified in the spliceosome C complex. Interacts with AGO1, AGO2, TBP and TXNL4/DIM1. Sumoylated.

The protein localises to the nucleus. It is found in the nucleoplasm. In terms of biological role, component of the heterogeneous nuclear ribonucleoprotein (hnRNP) complexes which provide the substrate for the processing events that pre-mRNAs undergo before becoming functional, translatable mRNAs in the cytoplasm. Plays a role in the regulation of alternative splicing events. Binds G-rich sequences in pre-mRNAs and keeps target RNA in an unfolded state. The chain is Heterogeneous nuclear ribonucleoprotein F (Hnrnpf) from Mus musculus (Mouse).